We begin with the raw amino-acid sequence, 261 residues long: CD40 ligand (261 aa).

The Cytoplasmic segment spans residues 1 to 22; that stretch reads MIETYNQPSPRSAATGLPVRMK. The helical; Signal-anchor for type II membrane protein transmembrane segment at 23-43 threads the bilayer; it reads IFMYLLTIFLITQMIGSALFA. Residues 44 to 261 lie on the Extracellular side of the membrane; it reads VYLHRRLDKI…GFTSFGLLKL (218 aa). The region spanning 122-261 is the THD domain; that stretch reads IAAHVISEAS…GFTSFGLLKL (140 aa). Cys-178 and Cys-218 are joined by a disulfide. An N-linked (GlcNAc...) asparagine glycan is attached at Asn-240.

It belongs to the tumor necrosis factor family. As to quaternary structure, homotrimer. Interacts with CD28. CD40 ligand, soluble form: Exists as either a monomer or a homotrimer. Forms a ternary complex between CD40 and integrins for CD40-CD40LG signaling. The soluble form derives from the membrane form by proteolytic processing.

It is found in the cell membrane. The protein localises to the cell surface. The protein resides in the secreted. In terms of biological role, cytokine that acts as a ligand to CD40/TNFRSF5. Costimulates T-cell proliferation and cytokine production. Its cross-linking on T-cells generates a costimulatory signal which enhances the production of IL4 and IL10 in conjunction with the TCR/CD3 ligation and CD28 costimulation. Induces the activation of NF-kappa-B. Induces the activation of kinases MAPK8 and PAK2 in T-cells. Mediates B-cell proliferation in the absence of co-stimulus as well as IgE production in the presence of IL4. Involved in immunoglobulin class switching. Acts as a ligand for integrins, specifically ITGA5:ITGB1 and ITGAV:ITGB3; both integrins and the CD40 receptor are required for activation of CD40-CD40LG signaling, which have cell-type dependent effects, such as B-cell activation, NF-kappa-B signaling and anti-apoptotic signaling. The sequence is that of CD40 ligand (CD40LG) from Cercocebus atys (Sooty mangabey).